A 325-amino-acid polypeptide reads, in one-letter code: Tyrosine phosphatase H2 (325 aa).

Residues 27–295 enclose the Tyrosine-protein phosphatase domain; it reads VTREHEKIMA…FFCYRVMERY (269 aa). C236 functions as the Phosphocysteine intermediate in the catalytic mechanism.

Belongs to the protein-tyrosine phosphatase family.

It localises to the host cytoplasm. It carries out the reaction O-phospho-L-tyrosyl-[protein] + H2O = L-tyrosyl-[protein] + phosphate. Functionally, suppresses host immune cell adhesion and phagocytosis. Triggers host mitochondrial membrane depolarization and caspase-dependent apoptosis. This is Tyrosine phosphatase H2 (H2) from Microplitis demolitor bracovirus (isolate Webb) (MdBV).